The chain runs to 225 residues: uncharacterized protein (225 aa).

4 consecutive transmembrane segments (helical) span residues 40 to 60 (LISL…LSIV), 63 to 83 (LAFF…PFSF), 151 to 171 (LSET…LTIL), and 176 to 196 (IFSL…IVSL).

It localises to the membrane. This is an uncharacterized protein from Saccharomyces cerevisiae (strain ATCC 204508 / S288c) (Baker's yeast).